The sequence spans 552 residues: Phosphoglucomutase (552 aa).

The active-site Phosphoserine intermediate is serine 135. Mg(2+) contacts are provided by serine 135, aspartate 289, aspartate 291, and aspartate 293.

It belongs to the phosphohexose mutase family. Mg(2+) serves as cofactor.

It catalyses the reaction alpha-D-glucose 1-phosphate = alpha-D-glucose 6-phosphate. Its pathway is glycolipid metabolism; diglucosyl-diacylglycerol biosynthesis. Catalyzes the interconversion between glucose-6-phosphate and alpha-glucose-1-phosphate. This is the first step in the biosynthesis of diglucosyl-diacylglycerol (Glc2-DAG), i.e. a glycolipid found in the membrane, which is also used as a membrane anchor for lipoteichoic acid (LTA). The protein is Phosphoglucomutase (pgcA) of Staphylococcus saprophyticus subsp. saprophyticus (strain ATCC 15305 / DSM 20229 / NCIMB 8711 / NCTC 7292 / S-41).